A 511-amino-acid polypeptide reads, in one-letter code: Serine hydroxymethyltransferase (511 aa).

The residue at position 287 (lysine 287) is an N6-(pyridoxal phosphate)lysine.

It belongs to the SHMT family. As to quaternary structure, homotetramer. Pyridoxal 5'-phosphate serves as cofactor.

The catalysed reaction is (6R)-5,10-methylene-5,6,7,8-tetrahydrofolate + glycine + H2O = (6S)-5,6,7,8-tetrahydrofolate + L-serine. It participates in one-carbon metabolism; tetrahydrofolate interconversion. In terms of biological role, interconversion of serine and glycine. In Caenorhabditis briggsae, this protein is Serine hydroxymethyltransferase.